Here is a 372-residue protein sequence, read N- to C-terminus: Chaperone protein DnaJ (372 aa).

Residues 5–69 form the J domain; sequence DYYEVLGVSK…DKRKQYDQFG (65 aa). Residues 139 to 221 form a CR-type zinc finger; that stretch reads GVDKIIELDL…CKGKGKYLER (83 aa). Zn(2+) is bound by residues cysteine 152, cysteine 155, cysteine 169, cysteine 172, cysteine 195, cysteine 198, cysteine 209, and cysteine 212. 4 CXXCXGXG motif repeats span residues 152-159, 169-176, 195-202, and 209-216; these read CSACFGSG, CNNCHGTG, CNVCNGAG, and CKNCKGKG.

Belongs to the DnaJ family. In terms of assembly, homodimer. Requires Zn(2+) as cofactor.

It is found in the cytoplasm. Functionally, participates actively in the response to hyperosmotic and heat shock by preventing the aggregation of stress-denatured proteins and by disaggregating proteins, also in an autonomous, DnaK-independent fashion. Unfolded proteins bind initially to DnaJ; upon interaction with the DnaJ-bound protein, DnaK hydrolyzes its bound ATP, resulting in the formation of a stable complex. GrpE releases ADP from DnaK; ATP binding to DnaK triggers the release of the substrate protein, thus completing the reaction cycle. Several rounds of ATP-dependent interactions between DnaJ, DnaK and GrpE are required for fully efficient folding. Also involved, together with DnaK and GrpE, in the DNA replication of plasmids through activation of initiation proteins. The polypeptide is Chaperone protein DnaJ (Mycoplasma capricolum subsp. capricolum (strain California kid / ATCC 27343 / NCTC 10154)).